A 478-amino-acid chain; its full sequence is Pentraxin-4 (478 aa).

Residues 1-25 (MGCSWRKTLSFFLVFVPIYLHGASS) form the signal peptide. N-linked (GlcNAc...) asparagine glycosylation is found at asparagine 67 and asparagine 91. Residues 208-222 (RDRQELRAASEHRGP) show a composition bias toward basic and acidic residues. Residues 208-262 (RDRQELRAASEHRGPPQDSSAPLQGRREPPASGSHRVLSGTAPKDPRQQAWSPQV) form a disordered region. Residues 269 to 473 (VGPTLVFPNA…GFVQGANCTC (205 aa)) enclose the Pentraxin (PTX) domain. A disulfide bridge links cysteine 300 with cysteine 364. Residues aspartate 322, asparagine 323, glutamate 406, glutamine 407, and aspartate 408 each coordinate Ca(2+).

Ca(2+) serves as cofactor. Widely expressed at low levels with highest levels in small intestine, testis and brain. Very low expression in endothelial cells, monocytes, neutrophils and lymphocytes. Isoform 1 is not expressed in small intestine.

Its subcellular location is the secreted. The chain is Pentraxin-4 (PTX4) from Homo sapiens (Human).